We begin with the raw amino-acid sequence, 482 residues long: Ribulose bisphosphate carboxylase large chain (482 aa).

The propeptide occupies 1-2 (MS). P3 carries the N-acetylproline modification. An N6,N6,N6-trimethyllysine modification is found at K14. N123 and T173 together coordinate substrate. K175 serves as the catalytic Proton acceptor. K177 serves as a coordination point for substrate. Residues K201, D203, and E204 each coordinate Mg(2+). Position 201 is an N6-carboxylysine (K201). The Proton acceptor role is filled by H294. Substrate-binding residues include R295, H327, and S379.

Belongs to the RuBisCO large chain family. Type I subfamily. As to quaternary structure, heterohexadecamer of 8 large chains and 8 small chains; disulfide-linked. The disulfide link is formed within the large subunit homodimers. The cofactor is Mg(2+). Post-translationally, the disulfide bond which can form in the large chain dimeric partners within the hexadecamer appears to be associated with oxidative stress and protein turnover.

It localises to the plastid. The protein localises to the chloroplast. It carries out the reaction 2 (2R)-3-phosphoglycerate + 2 H(+) = D-ribulose 1,5-bisphosphate + CO2 + H2O. The catalysed reaction is D-ribulose 1,5-bisphosphate + O2 = 2-phosphoglycolate + (2R)-3-phosphoglycerate + 2 H(+). Functionally, ruBisCO catalyzes two reactions: the carboxylation of D-ribulose 1,5-bisphosphate, the primary event in carbon dioxide fixation, as well as the oxidative fragmentation of the pentose substrate in the photorespiration process. Both reactions occur simultaneously and in competition at the same active site. The polypeptide is Ribulose bisphosphate carboxylase large chain (Phytolacca americana (American pokeweed)).